The following is an 87-amino-acid chain: Small ribosomal subunit protein bS20 (87 aa).

Belongs to the bacterial ribosomal protein bS20 family.

Functionally, binds directly to 16S ribosomal RNA. The polypeptide is Small ribosomal subunit protein bS20 (Clostridium botulinum (strain Alaska E43 / Type E3)).